Consider the following 367-residue polypeptide: MRLHSRQASNPHRQYSAAQSLHSSSDDSEHKEIPSTMGWAKRLMRWMVTVDQPHTFETSLKNYQSLAHVTNYIFFCGGRLRTVAKTKYLSVLVLVMLIAPIVLFSVFETGYLWKHVAGAKPCVVLCYYFWTLCFASFISTGATDPGTLPRNIHLAQLQDDYKLPLEYYSIITLPSPVANAPVRLKYCTTCRIWRPPRASHCAVCDSCILSFDHHCDWLNNCIGQRNHRYFLAFLFSSVLSSIWLLTCCALKLRHAGSPSAAPVSLLLICYCAVSIWYPLLLAIYHLFLTGTQQTTHEYLKAVDSRNPIFHKVTHPERNPFVTGSCARNMLLLMCQPRGYDFLHTRSEHQAGDWRFFRLPIPHSFEKV.

Residues 1 to 23 show a composition bias toward polar residues; it reads MRLHSRQASNPHRQYSAAQSLHS. Residues 1-32 form a disordered region; that stretch reads MRLHSRQASNPHRQYSAAQSLHSSSDDSEHKE. The Cytoplasmic segment spans residues 1 to 87; sequence MRLHSRQASN…GRLRTVAKTK (87 aa). The chain crosses the membrane as a helical span at residues 88–108; it reads YLSVLVLVMLIAPIVLFSVFE. The Lumenal segment spans residues 109–121; sequence TGYLWKHVAGAKP. A helical transmembrane segment spans residues 122–142; the sequence is CVVLCYYFWTLCFASFISTGA. Over 143–229 the chain is Cytoplasmic; the sequence is TDPGTLPRNI…NCIGQRNHRY (87 aa). A DHHC domain is found at 185 to 235; it reads KYCTTCRIWRPPRASHCAVCDSCILSFDHHCDWLNNCIGQRNHRYFLAFLF. The active-site S-palmitoyl cysteine intermediate is the cysteine 215. A helical membrane pass occupies residues 230–250; that stretch reads FLAFLFSSVLSSIWLLTCCAL. Residues 251 to 262 are Lumenal-facing; it reads KLRHAGSPSAAP. The chain crosses the membrane as a helical span at residues 263-283; the sequence is VSLLLICYCAVSIWYPLLLAI. Residues 284–367 are Cytoplasmic-facing; sequence YHLFLTGTQQ…LPIPHSFEKV (84 aa).

It belongs to the DHHC palmitoyltransferase family. ERF2/ZDHHC9 subfamily. Interacts with ERF4. Autopalmitoylated.

It localises to the endoplasmic reticulum membrane. It carries out the reaction L-cysteinyl-[protein] + hexadecanoyl-CoA = S-hexadecanoyl-L-cysteinyl-[protein] + CoA. In terms of biological role, the ERF2-ERF4 complex is a palmitoyltransferase specific for Ras proteins. The sequence is that of Palmitoyltransferase ERF2 (ERF2) from Eremothecium gossypii (strain ATCC 10895 / CBS 109.51 / FGSC 9923 / NRRL Y-1056) (Yeast).